A 209-amino-acid chain; its full sequence is Ion-translocating oxidoreductase complex subunit G (209 aa).

The helical transmembrane segment at 9-29 (ATTLALFAASTTAVTAVVNML) threads the bilayer. Threonine 175 is subject to FMN phosphoryl threonine.

It belongs to the RnfG family. The complex is composed of six subunits: RnfA, RnfB, RnfC, RnfD, RnfE and RnfG. FMN is required as a cofactor.

The protein resides in the cell inner membrane. Its function is as follows. Part of a membrane-bound complex that couples electron transfer with translocation of ions across the membrane. The chain is Ion-translocating oxidoreductase complex subunit G from Pectobacterium atrosepticum (strain SCRI 1043 / ATCC BAA-672) (Erwinia carotovora subsp. atroseptica).